The following is a 473-amino-acid chain: G2/mitotic-specific cyclin-1 (473 aa).

Over residues 1-12 the composition is skewed to polar residues; it reads MGSRNIVQQQNR. Disordered regions lie at residues 1 to 23 and 134 to 155; these read MGSR…AMKQ and KEKP…APTL. Basic and acidic residues predominate over residues 134-147; the sequence is KEKPIEKEKAAEKS.

Belongs to the cyclin family. Cyclin AB subfamily. In terms of assembly, interacts with the CDC2 and CDK2 protein kinases to form a serine/threonine kinase holoenzyme complex. The cyclin subunit imparts substrate specificity to the complex.

Functionally, essential for the control of the cell cycle at the G2/M (mitosis) transition. G2/M cyclins accumulate steadily during G2 and are abruptly destroyed at mitosis. In Antirrhinum majus (Garden snapdragon), this protein is G2/mitotic-specific cyclin-1.